Consider the following 529-residue polypeptide: MDATALWQRYLEWLYYHPELGIYLDVSRMRFDSAFVETLAPQFAKAFADMAALEAGAIANPDEHRQVGHYWLRAPEIAPTEELKTEIVETLEQIETFAAKVHHGQIHPTRGGLFTDIISVGIGGSALGPQFVSQSLAPERPPLDIHFLDNTDPDGIDRVLNRVEPRLSTTLVIIISKSGGTPETRNGMLEVEKRFKDAGLNFAEHAVAITSYGSKLAQIAESAGWLAIFPMHDWVGGRTSELSAVGLLPAALQGIPIREMLHGAKLMDEATRVPDLKTNPAALLALSWYCAGEGKGKKDMVVLPYKDSLQLFSRYLQQLVMESLGKEKDLQGQVVHQGIAVYGNKGTTDQHAYVQQLREGLNNFFLTFIEVLQDRQGASVEVEPGITSGDYLSGLLLGTRQALYEKQRDSITLTLPQVTPLTVGALIALYERTVGLYGFLINVNAYHQPGVEAGKKAAAANLALQKQLLRILSQEPQPISLMTLAAKVGAPEQTETIYLLLRHLAANGRGVSLQGPPEQPDRLLVRATA.

E322 acts as the Proton donor in catalysis. Residues H351 and K455 contribute to the active site.

This sequence belongs to the GPI family.

The protein localises to the cytoplasm. The catalysed reaction is alpha-D-glucose 6-phosphate = beta-D-fructose 6-phosphate. It participates in carbohydrate biosynthesis; gluconeogenesis. Its pathway is carbohydrate degradation; glycolysis; D-glyceraldehyde 3-phosphate and glycerone phosphate from D-glucose: step 2/4. Its function is as follows. Catalyzes the reversible isomerization of glucose-6-phosphate to fructose-6-phosphate. The sequence is that of Glucose-6-phosphate isomerase from Cyanothece sp. (strain PCC 7425 / ATCC 29141).